Reading from the N-terminus, the 437-residue chain is Adenylosuccinate synthetase (437 aa).

GTP-binding positions include 12-18 (GDEGKGK) and 40-42 (GHT). Asp-13 acts as the Proton acceptor in catalysis. Positions 13 and 40 each coordinate Mg(2+). IMP is bound by residues 13 to 16 (DEGK), 38 to 41 (NAGH), Thr-128, Arg-142, Gln-223, Thr-238, and Arg-302. The Proton donor role is filled by His-41. 298–304 (TTTGRRR) contributes to the substrate binding site. GTP-binding positions include Arg-304, 330–332 (KLD), and 412–414 (SLG).

The protein belongs to the adenylosuccinate synthetase family. As to quaternary structure, homodimer. Mg(2+) serves as cofactor.

The protein localises to the cytoplasm. The enzyme catalyses IMP + L-aspartate + GTP = N(6)-(1,2-dicarboxyethyl)-AMP + GDP + phosphate + 2 H(+). It participates in purine metabolism; AMP biosynthesis via de novo pathway; AMP from IMP: step 1/2. Functionally, plays an important role in the de novo pathway of purine nucleotide biosynthesis. Catalyzes the first committed step in the biosynthesis of AMP from IMP. This Prochlorococcus marinus (strain MIT 9211) protein is Adenylosuccinate synthetase.